The primary structure comprises 278 residues: Nucleotide-binding protein Tmel_1373 (278 aa).

10-17 contributes to the ATP binding site; it reads GLSGAGKS. 58–61 provides a ligand contact to GTP; that stretch reads DSRS.

Belongs to the RapZ-like family.

Displays ATPase and GTPase activities. The polypeptide is Nucleotide-binding protein Tmel_1373 (Thermosipho melanesiensis (strain DSM 12029 / CIP 104789 / BI429)).